Reading from the N-terminus, the 310-residue chain is Protein translocase subunit SecF (310 aa).

A run of 6 helical transmembrane segments spans residues 18-38, 135-155, 162-182, 188-208, 240-260, and 267-287; these read FFTISGLLLLLTVGAFIYRGG, QAVYAFLFAFLVMIVYVAFRF, IVSVVGIIHDIVISLGFVILA, ITIVAALLTVVGYSINDTIVL, IVTSLTVFIVACSLFFFGGEV, and IMIIGTVLGVFSTIFVCAPLI.

The protein belongs to the SecD/SecF family. SecF subfamily. Forms a complex with SecD. Part of the essential Sec protein translocation apparatus which comprises SecA, SecYEG and auxiliary proteins SecDF. Other proteins may also be involved.

The protein localises to the cell inner membrane. Its function is as follows. Part of the Sec protein translocase complex. Interacts with the SecYEG preprotein conducting channel. SecDF uses the proton motive force (PMF) to complete protein translocation after the ATP-dependent function of SecA. The polypeptide is Protein translocase subunit SecF (Endomicrobium trichonymphae).